Reading from the N-terminus, the 515-residue chain is Fatty acyl-CoA reductase 1 (515 aa).

The Cytoplasmic portion of the chain corresponds to 1–465; the sequence is MVSIPEYYEG…ARKHLNKLRN (465 aa). Residues 451-507 are necessary and sufficient for PEX19-mediated localization into peroxisome membrane; sequence SGLPAARKHLNKLRNIRYGFNTILVILIWRIFIARSQMARNIWYFVVSLCYKFLSYF. A helical membrane pass occupies residues 466 to 483; sequence IRYGFNTILVILIWRIFI. Topologically, residues 484-515 are peroxisomal; it reads ARSQMARNIWYFVVSLCYKFLSYFRASSTMRY.

This sequence belongs to the fatty acyl-CoA reductase family. As to quaternary structure, interacts with PEX19; PEX19 mediates the targeting of FAR1 to peroxisomes.

It localises to the peroxisome membrane. The catalysed reaction is a long-chain fatty acyl-CoA + 2 NADPH + 2 H(+) = a long-chain primary fatty alcohol + 2 NADP(+) + CoA. The enzyme catalyses hexadecanoyl-CoA + 2 NADPH + 2 H(+) = hexadecan-1-ol + 2 NADP(+) + CoA. It carries out the reaction octadecanoyl-CoA + 2 NADPH + 2 H(+) = octadecan-1-ol + 2 NADP(+) + CoA. It catalyses the reaction (9Z)-octadecenoyl-CoA + 2 NADPH + 2 H(+) = (9Z)-octadecen-1-ol + 2 NADP(+) + CoA. The catalysed reaction is (9Z,12Z)-octadecadienoyl-CoA + 2 NADPH + 2 H(+) = (9Z,12Z)-octadecadien-1-ol + 2 NADP(+) + CoA. The enzyme catalyses eicosanoyl-CoA + 2 NADPH + 2 H(+) = eicosan-1-ol + 2 NADP(+) + CoA. It carries out the reaction 16-methylheptadecanoyl-CoA + 2 NADPH + 2 H(+) = 16-methylheptadecan-1-ol + 2 NADP(+) + CoA. It catalyses the reaction 18-methylnonadecanoyl-CoA + 2 NADPH + 2 H(+) = 18-methylnonadecan-1-ol + 2 NADP(+) + CoA. In terms of biological role, catalyzes the reduction of saturated and unsaturated C16 or C18 fatty acyl-CoA to fatty alcohols. It plays an essential role in the production of ether lipids/plasmalogens which synthesis requires fatty alcohols. In parallel, it is also required for wax monoesters production since fatty alcohols also constitute a substrate for their synthesis. This Pongo abelii (Sumatran orangutan) protein is Fatty acyl-CoA reductase 1.